Here is a 367-residue protein sequence, read N- to C-terminus: Peptide chain release factor 2 (367 aa).

Gln-250 carries the N5-methylglutamine modification.

Belongs to the prokaryotic/mitochondrial release factor family. In terms of processing, methylated by PrmC. Methylation increases the termination efficiency of RF2.

The protein resides in the cytoplasm. In terms of biological role, peptide chain release factor 2 directs the termination of translation in response to the peptide chain termination codons UGA and UAA. This chain is Peptide chain release factor 2, found in Mycobacteroides abscessus (strain ATCC 19977 / DSM 44196 / CCUG 20993 / CIP 104536 / JCM 13569 / NCTC 13031 / TMC 1543 / L948) (Mycobacterium abscessus).